The chain runs to 969 residues: Poly(ADP-ribose) glycohydrolase (969 aa).

3 disordered regions span residues 1–149, 161–341, and 368–400; these read MSAG…QQQT, HAEQ…CQAR, and NNAG…GKRD. Positions 1–449 are A-domain; that stretch reads MSAGPGWEPC…LPPEKKWLGT (449 aa). Residues 10–16 carry the Nuclear localization signal motif; it reads CTKRPRW. Polar residues predominate over residues 69–84; sequence NATSFVFKQKTITTWM. The PIP-box (PCNA interacting peptide) motif lies at 77-84; it reads QKTITTWM. Basic and acidic residues predominate over residues 87-100; the sequence is KGPKTAESESKENN. The span at 101–113 shows a compositional bias: polar residues; that stretch reads NTRIDSMMSSVQK. The segment covering 116–125 has biased composition (basic and acidic residues); it reads FYPHKVEKLE. 2 stretches are compositionally biased toward polar residues: residues 128 to 149 and 179 to 189; these read PQLN…QQQT and QLSNANIGQSP. A Phosphoserine modification is found at S135. Phosphothreonine is present on T137. Basic and acidic residues predominate over residues 190-205; that stretch reads HTDDHSDTDHEEDRDN. S195 bears the Phosphoserine mark. Residue T197 is modified to Phosphothreonine. A compositionally biased stretch (polar residues) spans 226–237; sequence ARSNCKCSGSRQ. 7 positions are modified to phosphoserine: S256, S259, S281, S286, S293, S297, and S311. Over residues 275 to 284 the composition is skewed to polar residues; the sequence is KLTGQESSLG. Acidic residues predominate over residues 311–325; that stretch reads SEADEETSPVFDEQD. Polar residues-rich tracts occupy residues 329–339 and 369–387; these read SQTANKLSSCQ and NAGT…SSLN. N6-acetyllysine is present on K334. The tract at residues 603-788 is catalytic; that stretch reads QPIPLLKQKM…TEQYSEYTGY (186 aa). 719–720 lines the substrate pocket; that stretch reads IE. D730 is a catalytic residue. Substrate contacts are provided by N733 and Q747. Catalysis depends on residues E748 and E749. Substrate is bound by residues Y788 and 862–867; that span reads NWGCGA.

It belongs to the poly(ADP-ribose) glycohydrolase family. Interacts with PCNA. Interacts with NUDT5.

It localises to the nucleus. The catalysed reaction is [(1''-&gt;2')-ADP-alpha-D-ribose](n) + H2O = [(1''-&gt;2')-ADP-alpha-D-ribose](n-1) + ADP-D-ribose. In terms of biological role, poly(ADP-ribose) glycohydrolase that degrades poly(ADP-ribose) by hydrolyzing the ribose-ribose bonds present in poly(ADP-ribose). PARG acts both as an endo- and exoglycosidase, releasing poly(ADP-ribose) of different length as well as ADP-ribose monomers. It is however unable to cleave the ester bond between the terminal ADP-ribose and ADP-ribosylated residues, leaving proteins that are mono-ADP-ribosylated. Poly(ADP-ribose) is synthesized after DNA damage is only present transiently and is rapidly degraded by PARG. Required to prevent detrimental accumulation of poly(ADP-ribose) upon prolonged replicative stress, while it is not required for recovery from transient replicative stress. Responsible for the prevalence of mono-ADP-ribosylated proteins in cells, thanks to its ability to degrade poly(ADP-ribose) without cleaving the terminal protein-ribose bond. Required for retinoid acid-dependent gene transactivation, probably by removing poly(ADP-ribose) from histone demethylase KDM4D, allowing chromatin derepression at RAR-dependent gene promoters. Involved in the synthesis of ATP in the nucleus, together with PARP1, NMNAT1 and NUDT5. Nuclear ATP generation is required for extensive chromatin remodeling events that are energy-consuming. The protein is Poly(ADP-ribose) glycohydrolase of Mus musculus (Mouse).